The following is a 37-amino-acid chain: Large ribosomal subunit protein bL36 (37 aa).

It belongs to the bacterial ribosomal protein bL36 family.

In Mycobacteroides abscessus (strain ATCC 19977 / DSM 44196 / CCUG 20993 / CIP 104536 / JCM 13569 / NCTC 13031 / TMC 1543 / L948) (Mycobacterium abscessus), this protein is Large ribosomal subunit protein bL36.